A 551-amino-acid polypeptide reads, in one-letter code: Cation/acetate symporter ActP (551 aa).

14 helical membrane passes run 8-28 (ALAATLLPLGAHAADAITGAV), 35-55 (WQAIVMFLIFVALTLYITYWA), 78-98 (GLAIAGDFMSAASFLGISALV), 105-125 (GLIYSLGFLVGWPIILFLIAE), 151-171 (LSACGSLVVVALYLIAQMVGA), 185-205 (VAVVLVGVLMVLYVLFGGMLA), 208-228 (WVQIIKAVLLLCGASFMAFMV), 264-284 (ISALSLGLGLMFGTAGLPHIL), 305-325 (GFMGYFYILTFIIGFGAIMLV), 357-377 (LFLGFISAVAFATILAVVAGL), 406-426 (VSKITVLILGVVAILLGILFE), 430-450 (IAFMVGLAFSIAASCNFPIIL), 465-485 (VGGWLGLLTAVILMILGPTIW), and 496-516 (FPYEYPALFSIAIAFIGIWVF).

The protein belongs to the sodium:solute symporter (SSF) (TC 2.A.21) family.

Its subcellular location is the cell inner membrane. Transports acetate. This Klebsiella pneumoniae (strain 342) protein is Cation/acetate symporter ActP.